We begin with the raw amino-acid sequence, 458 residues long: ATP synthase subunit beta (458 aa).

148–155 (GGAGVGKT) contacts ATP.

It belongs to the ATPase alpha/beta chains family. As to quaternary structure, F-type ATPases have 2 components, CF(1) - the catalytic core - and CF(0) - the membrane proton channel. CF(1) has five subunits: alpha(3), beta(3), gamma(1), delta(1), epsilon(1). CF(0) has three main subunits: a(1), b(2) and c(9-12). The alpha and beta chains form an alternating ring which encloses part of the gamma chain. CF(1) is attached to CF(0) by a central stalk formed by the gamma and epsilon chains, while a peripheral stalk is formed by the delta and b chains.

Its subcellular location is the cell inner membrane. The enzyme catalyses ATP + H2O + 4 H(+)(in) = ADP + phosphate + 5 H(+)(out). Functionally, produces ATP from ADP in the presence of a proton gradient across the membrane. The catalytic sites are hosted primarily by the beta subunits. This is ATP synthase subunit beta from Pseudomonas entomophila (strain L48).